Reading from the N-terminus, the 329-residue chain is RING finger protein 225 (329 aa).

Residues 1–55 are disordered; that stretch reads MPCPRPFWLRHSRAPQGSGPSSPGSLSAPRSPSRGEDQEEEEEEEGDGSPGSGPI. The span at 14–32 shows a compositional bias: low complexity; sequence APQGSGPSSPGSLSAPRSP. The segment covering 37-47 has biased composition (acidic residues); it reads DQEEEEEEEGD. An RING-type zinc finger spans residues 64–112; sequence CLICVSSFDGVFKLPKRLDCGHVFCLECLARLSLATAGGGNAVACPVCR. A disordered region spans residues 122-181; it reads GLPALPTQSGLLPRDARAPPSRQGSVRFDRRRGLLYLRPPPPPPGPRKARAPPPPPPLRL. Residues 159–179 show a composition bias toward pro residues; the sequence is RPPPPPPGPRKARAPPPPPPL. A helical membrane pass occupies residues 203-223; sequence ALAVLVAAGLVVSGVYIFFLI. Positions 248-329 are disordered; sequence FPPRPPPGSP…RGARRLWGSQ (82 aa). A compositionally biased stretch (acidic residues) spans 281–293; it reads DALEPEAGPEDPA. Basic and acidic residues predominate over residues 294–304; that stretch reads EAERTLDRRSD.

The protein resides in the membrane. The sequence is that of RING finger protein 225 from Homo sapiens (Human).